A 562-amino-acid polypeptide reads, in one-letter code: Valerena-4,7(11)-diene synthase (562 aa).

Asp314, Asp318, and Glu467 together coordinate Mg(2+). Positions 314-318 match the DDXXD motif motif; that stretch reads DDTYD.

This sequence belongs to the terpene synthase family. It depends on Mg(2+) as a cofactor. As to expression, predominantly expressed in root.

It carries out the reaction (2E,6E)-farnesyl diphosphate = valerena-4,7(11)-diene + diphosphate. Functionally, catalyzes formation of valerena-4,7(11)-diene, one of the active ingredients responsible for the sedative effect extracted from Valeriana officinalis root. The sequence is that of Valerena-4,7(11)-diene synthase (TPS2) from Valeriana officinalis (Valerian).